The following is a 313-amino-acid chain: Probable cell division protein WhiA (313 aa).

A DNA-binding region (H-T-H motif) is located at residues 278-311 (SLKELGKLLDPPLSKSGVNHRLRRIKSIANEIRG).

The protein belongs to the WhiA family.

In terms of biological role, involved in cell division and chromosome segregation. The protein is Probable cell division protein WhiA of Halothermothrix orenii (strain H 168 / OCM 544 / DSM 9562).